Consider the following 42-residue polypeptide: Cytochrome b6-f complex subunit 7 (42 aa).

Residues Ala-19–Leu-37 form a helical membrane-spanning segment.

This sequence belongs to the PetM family. As to quaternary structure, the 4 large subunits of the cytochrome b6-f complex are cytochrome b6, subunit IV (17 kDa polypeptide, PetD), cytochrome f and the Rieske protein, while the 4 small subunits are PetG, PetL, PetM and PetN. The complex functions as a dimer.

It is found in the plastid. The protein resides in the chloroplast thylakoid membrane. Component of the cytochrome b6-f complex, which mediates electron transfer between photosystem II (PSII) and photosystem I (PSI), cyclic electron flow around PSI, and state transitions. This is Cytochrome b6-f complex subunit 7 from Thalassiosira pseudonana (Marine diatom).